The sequence spans 370 residues: Platelet-derived growth factor D (370 aa).

The signal sequence occupies residues Met1–Ala23. One can recognise a CUB domain in the interval Arg52 to Val170. The cysteines at positions 109 and 131 are disulfide-linked. N-linked (GlcNAc...) asparagine glycosylation is present at Asn276. Cystine bridges form between Cys302-Cys360 and Cys306-Cys362.

It belongs to the PDGF/VEGF growth factor family. Homodimer; disulfide-linked. Interacts with PDGFRB homodimers, and with heterodimers formed by PDGFRA and PDGFRB. In terms of processing, activated by proteolytic cleavage. Proteolytic removal of the N-terminal CUB domain releasing the core domain is necessary for unmasking the receptor-binding epitopes of the core domain. Cleavage after Arg-247 or Arg-249 by urokinase plasminogen activator gives rise to the active form. As to expression, widely expressed. Expressed at high levels in the kidney, adrenal glands, eye and CNS. In the kidney the localization is confined to arterial and arteriolar vascular smooth muscle cells and is also detected at low levels in the glomeruli In the eye in the anterior segment it is localized to the iris and ciliary body. In the retina localizes intensely to the outer plexiform layer, which contains photoreceptor axons and the synaptic layer between photoreceptors and second order neurons. In the spinal cord, prominently expressed in the motorneurons.

Its subcellular location is the secreted. Growth factor that plays an essential role in the regulation of embryonic development, cell proliferation, cell migration, survival and chemotaxis. Potent mitogen for cells of mesenchymal origin. Plays an important role in wound healing. Induces macrophage recruitment, increased interstitial pressure, and blood vessel maturation during angiogenesis. May play an important role in control of lens epithelial cell proliferation. Can initiate events that lead to a mesangial proliferative glomerulonephritis, including influx of monocytes and macrophages and production of extracellular matrix. The sequence is that of Platelet-derived growth factor D (Pdgfd) from Rattus norvegicus (Rat).